The chain runs to 242 residues: Octanoyltransferase (242 aa).

The BPL/LPL catalytic domain occupies 31–206; the sequence is SQTTDEIWFL…LFLKNFGYNQ (176 aa). Residues 70–77, 137–139, and 150–152 contribute to the substrate site; these read RGGQVTYH, SIG, and GLA. Cys168 serves as the catalytic Acyl-thioester intermediate.

It belongs to the LipB family.

It is found in the cytoplasm. It carries out the reaction octanoyl-[ACP] + L-lysyl-[protein] = N(6)-octanoyl-L-lysyl-[protein] + holo-[ACP] + H(+). Its pathway is protein modification; protein lipoylation via endogenous pathway; protein N(6)-(lipoyl)lysine from octanoyl-[acyl-carrier-protein]: step 1/2. Its function is as follows. Catalyzes the transfer of endogenously produced octanoic acid from octanoyl-acyl-carrier-protein onto the lipoyl domains of lipoate-dependent enzymes. Lipoyl-ACP can also act as a substrate although octanoyl-ACP is likely to be the physiological substrate. This chain is Octanoyltransferase, found in Coxiella burnetii (strain Dugway 5J108-111).